Here is a 132-residue protein sequence, read N- to C-terminus: ATP synthase epsilon chain (132 aa).

It belongs to the ATPase epsilon chain family. As to quaternary structure, F-type ATPases have 2 components, CF(1) - the catalytic core - and CF(0) - the membrane proton channel. CF(1) has five subunits: alpha(3), beta(3), gamma(1), delta(1), epsilon(1). CF(0) has three main subunits: a, b and c.

The protein resides in the cell membrane. In terms of biological role, produces ATP from ADP in the presence of a proton gradient across the membrane. The polypeptide is ATP synthase epsilon chain (Bacillus velezensis (strain DSM 23117 / BGSC 10A6 / LMG 26770 / FZB42) (Bacillus amyloliquefaciens subsp. plantarum)).